A 40-amino-acid polypeptide reads, in one-letter code: MVDTTGRIPLWLVGTVAGILVIGLIGIFFYGSYSGLGSSL.

A helical transmembrane segment spans residues 8–28; that stretch reads IPLWLVGTVAGILVIGLIGIF.

The protein belongs to the PsbJ family. As to quaternary structure, PSII is composed of 1 copy each of membrane proteins PsbA, PsbB, PsbC, PsbD, PsbE, PsbF, PsbH, PsbI, PsbJ, PsbK, PsbL, PsbM, PsbT, PsbX, PsbY, PsbZ, Psb30/Ycf12, at least 3 peripheral proteins of the oxygen-evolving complex and a large number of cofactors. It forms dimeric complexes.

The protein resides in the plastid. The protein localises to the chloroplast thylakoid membrane. One of the components of the core complex of photosystem II (PSII). PSII is a light-driven water:plastoquinone oxidoreductase that uses light energy to abstract electrons from H(2)O, generating O(2) and a proton gradient subsequently used for ATP formation. It consists of a core antenna complex that captures photons, and an electron transfer chain that converts photonic excitation into a charge separation. The sequence is that of Photosystem II reaction center protein J from Gnetum parvifolium (Small-leaved jointfir).